We begin with the raw amino-acid sequence, 294 residues long: Protease HtpX homolog (294 aa).

The next 2 membrane-spanning stretches (helical) occupy residues 12–32 and 34–54; these read VLFG…ASSF and SPGV…YSYW. H138 is a Zn(2+) binding site. The active site involves E139. Zn(2+) is bound at residue H142. Transmembrane regions (helical) follow at residues 152 to 172 and 188 to 208; these read SVAG…VFFG and LALL…QLAI. Position 213 (E213) interacts with Zn(2+).

This sequence belongs to the peptidase M48B family. Zn(2+) serves as cofactor.

The protein localises to the cell membrane. In Kineococcus radiotolerans (strain ATCC BAA-149 / DSM 14245 / SRS30216), this protein is Protease HtpX homolog.